Reading from the N-terminus, the 745-residue chain is uncharacterized protein (745 aa).

One can recognise an HTH araC/xylS-type domain in the interval 158–256; sequence NQVCDYIELH…HQTPKQYRGD (99 aa). DNA-binding regions (H-T-H motif) lie at residues 175 to 196 and 223 to 246; these read SELS…AESL and ITDI…KHFT.

This is an uncharacterized protein from Staphylococcus aureus (strain MRSA252).